Reading from the N-terminus, the 29-residue chain is Serum amyloid P-component (29 aa).

One can recognise a Pentraxin (PTX) domain in the interval 6 to 29 (LGKVFVFSKESNVDDVKLLTPQTE).

The protein belongs to the pentraxin family. In terms of assembly, homopentamer. Pentraxin (or pentaxin) have a discoid arrangement of 5 non-covalently bound subunits. Ca(2+) is required as a cofactor.

Its subcellular location is the secreted. The sequence is that of Serum amyloid P-component from Hippoglossus hippoglossus (Atlantic halibut).